A 62-amino-acid polypeptide reads, in one-letter code: Sperm protamine P1 (62 aa).

The interval 1-62 is disordered; the sequence is MARYRRRSRS…RYSRRGRRRY (62 aa).

The protein belongs to the protamine P1 family. Testis.

The protein localises to the nucleus. The protein resides in the chromosome. Protamines substitute for histones in the chromatin of sperm during the haploid phase of spermatogenesis. They compact sperm DNA into a highly condensed, stable and inactive complex. The protein is Sperm protamine P1 (PRM1) of Sarcophilus harrisii (Tasmanian devil).